A 428-amino-acid polypeptide reads, in one-letter code: C4-dicarboxylate transport protein (428 aa).

9 consecutive transmembrane segments (helical) span residues 8–28 (SLYF…HFYP), 44–64 (LIKM…IAGM), 76–96 (VALL…LVIV), 142–162 (IGAF…LFGF), 184–204 (VIFG…FGAM), 222–242 (LIVC…GSIA), 289–309 (VVGL…SIYL), 326–346 (IFHQ…AAGV), and 352–372 (IVLA…LALI).

The protein belongs to the dicarboxylate/amino acid:cation symporter (DAACS) (TC 2.A.23) family.

The protein localises to the cell inner membrane. Its function is as follows. Responsible for the transport of dicarboxylates such as succinate, fumarate, and malate from the periplasm across the membrane. The chain is C4-dicarboxylate transport protein from Cronobacter sakazakii (strain ATCC BAA-894) (Enterobacter sakazakii).